We begin with the raw amino-acid sequence, 467 residues long: Asparagine--tRNA ligase (467 aa).

Belongs to the class-II aminoacyl-tRNA synthetase family. In terms of assembly, homodimer.

Its subcellular location is the cytoplasm. It catalyses the reaction tRNA(Asn) + L-asparagine + ATP = L-asparaginyl-tRNA(Asn) + AMP + diphosphate + H(+). This is Asparagine--tRNA ligase from Actinobacillus succinogenes (strain ATCC 55618 / DSM 22257 / CCUG 43843 / 130Z).